We begin with the raw amino-acid sequence, 222 residues long: Large ribosomal subunit protein bL20 (222 aa).

Belongs to the bacterial ribosomal protein bL20 family.

In terms of biological role, binds directly to 23S ribosomal RNA and is necessary for the in vitro assembly process of the 50S ribosomal subunit. It is not involved in the protein synthesizing functions of that subunit. The protein is Large ribosomal subunit protein bL20 (rplT) of Paenarthrobacter aurescens (strain TC1).